Consider the following 180-residue polypeptide: ATP synthase subunit delta (180 aa).

This sequence belongs to the ATPase delta chain family. In terms of assembly, F-type ATPases have 2 components, F(1) - the catalytic core - and F(0) - the membrane proton channel. F(1) has five subunits: alpha(3), beta(3), gamma(1), delta(1), epsilon(1). F(0) has three main subunits: a(1), b(2) and c(10-14). The alpha and beta chains form an alternating ring which encloses part of the gamma chain. F(1) is attached to F(0) by a central stalk formed by the gamma and epsilon chains, while a peripheral stalk is formed by the delta and b chains.

The protein localises to the cell inner membrane. In terms of biological role, f(1)F(0) ATP synthase produces ATP from ADP in the presence of a proton or sodium gradient. F-type ATPases consist of two structural domains, F(1) containing the extramembraneous catalytic core and F(0) containing the membrane proton channel, linked together by a central stalk and a peripheral stalk. During catalysis, ATP synthesis in the catalytic domain of F(1) is coupled via a rotary mechanism of the central stalk subunits to proton translocation. Functionally, this protein is part of the stalk that links CF(0) to CF(1). It either transmits conformational changes from CF(0) to CF(1) or is implicated in proton conduction. This is ATP synthase subunit delta from Cupriavidus metallidurans (strain ATCC 43123 / DSM 2839 / NBRC 102507 / CH34) (Ralstonia metallidurans).